Consider the following 675-residue polypeptide: Methionine--tRNA ligase (675 aa).

The short motif at 15–25 is the 'HIGH' region element; the sequence is PYANGPIHLGH. Residues cysteine 146, cysteine 149, cysteine 159, and cysteine 162 each coordinate Zn(2+). The short motif at 332–336 is the 'KMSKS' region element; the sequence is KMSKS. Lysine 335 lines the ATP pocket. A tRNA-binding domain is found at 574 to 675; that stretch reads DFAKIDLRVA…AGAKPGMRVK (102 aa).

This sequence belongs to the class-I aminoacyl-tRNA synthetase family. MetG type 1 subfamily. In terms of assembly, homodimer. Zn(2+) is required as a cofactor.

The protein resides in the cytoplasm. It carries out the reaction tRNA(Met) + L-methionine + ATP = L-methionyl-tRNA(Met) + AMP + diphosphate. Its function is as follows. Is required not only for elongation of protein synthesis but also for the initiation of all mRNA translation through initiator tRNA(fMet) aminoacylation. In Shewanella amazonensis (strain ATCC BAA-1098 / SB2B), this protein is Methionine--tRNA ligase.